A 629-amino-acid polypeptide reads, in one-letter code: Glycerol-3-phosphate dehydrogenase SDP6, mitochondrial (629 aa).

The transit peptide at 1 to 48 (MSLASIRRLAAGAAVIAAASGGAVYLSPSVASSDKGGGPILDSLRRRL) directs the protein to the mitochondrion. 75 to 103 (DVLVIGGGATGSGVALDAVTRGLRVGLVE) is a binding site for FAD.

Belongs to the FAD-dependent glycerol-3-phosphate dehydrogenase family. FAD serves as cofactor. As to expression, expressed in germinating seedlings. Also detected in roots, leaves, flowers, developing siliques and germinating seeds.

The protein resides in the mitochondrion inner membrane. It carries out the reaction a quinone + sn-glycerol 3-phosphate = dihydroxyacetone phosphate + a quinol. Its pathway is polyol metabolism; glycerol degradation via glycerol kinase pathway; glycerone phosphate from sn-glycerol 3-phosphate (anaerobic route): step 1/1. Functionally, required for glycerol catabolism and involved in NADH/NAD(+) homeostasis. Essential for postgerminative growth and seedling establishment. The polypeptide is Glycerol-3-phosphate dehydrogenase SDP6, mitochondrial (Arabidopsis thaliana (Mouse-ear cress)).